The sequence spans 440 residues: Glutamyl-tRNA reductase (440 aa).

Residues 50-53, Ser109, 114-116, and Gln120 each bind substrate; these read TCNR and EPQ. The Nucleophile role is filled by Cys51. Residue 189–194 participates in NADP(+) binding; the sequence is GAGEMA.

The protein belongs to the glutamyl-tRNA reductase family. In terms of assembly, homodimer.

The catalysed reaction is (S)-4-amino-5-oxopentanoate + tRNA(Glu) + NADP(+) = L-glutamyl-tRNA(Glu) + NADPH + H(+). The protein operates within porphyrin-containing compound metabolism; protoporphyrin-IX biosynthesis; 5-aminolevulinate from L-glutamyl-tRNA(Glu): step 1/2. Catalyzes the NADPH-dependent reduction of glutamyl-tRNA(Glu) to glutamate 1-semialdehyde (GSA). The sequence is that of Glutamyl-tRNA reductase from Nitratidesulfovibrio vulgaris (strain DP4) (Desulfovibrio vulgaris).